Reading from the N-terminus, the 1571-residue chain is Guanine nucleotide-releasing factor 2 (1571 aa).

Disordered stretches follow at residues 28 to 85, 202 to 271, and 287 to 316; these read LPPH…RDTN, INSG…KLAR, and MRTT…PTTE. Over residues 55-73 the composition is skewed to basic residues; that stretch reads QLHHHHHQQHHHNHHRLWK. A compositionally biased stretch (polar residues) spans 74–83; it reads TQRQSWSPRD. A compositionally biased stretch (gly residues) spans 230–248; it reads TPGGSSRVGGAGAGGGGGV. Over residues 287–297 the composition is skewed to polar residues; sequence MRTTNNTLGRS. Residues 298 to 309 show a composition bias toward basic residues; sequence HSPHSPRTKHGT. A phosphoserine mark is found at Ser496 and Ser523. Disordered stretches follow at residues 513 to 580, 614 to 646, 695 to 719, 728 to 747, 776 to 868, and 879 to 898; these read HNVN…QASP, RSRS…HQHL, GEGV…ESGF, STQT…SSNS, QRHI…SEVA, and LNHH…HSKH. The residue at position 524 (Thr524) is a Phosphothreonine. Position 526 is a phosphoserine (Ser526). A compositionally biased stretch (pro residues) spans 532–550; the sequence is SPPPKPPLPNRASNPPPLP. An SH3-binding motif is present at residues 546 to 556; sequence PPPLPPKRRSQ. Residues 556–579 show a composition bias toward low complexity; sequence QPSASAGTVGVGCSSSTSTSNQAS. At Ser615 the chain carries Phosphoserine. Positions 620 to 631 are enriched in polar residues; the sequence is ENSQCSFDSALN. Over residues 697–707 the composition is skewed to low complexity; it reads GVAAAASGDGE. Residues 708-718 show a composition bias toward polar residues; the sequence is TNSNRHSNESG. Composition is skewed to low complexity over residues 735–747 and 780–824; these read SVQS…SSNS and SSSS…DLAP. Positions 820-831 match the SH3-binding motif; it reads ADLAPALPPKSI. Residues 851 to 866 show a composition bias toward polar residues; the sequence is VQSSSGWASHRSSQSE. 2 short sequence motifs (SH3-binding) span residues 924 to 935 and 986 to 997; these read DQEPPPLPIKKK and LEMPPALPPKNY. The disordered stretch occupies residues 1013–1038; sequence PVIVTTPPPSPKPTLGENGSTGRPDS. The 123-residue stretch at 1170–1292 folds into the N-terminal Ras-GEF domain; the sequence is DGPEVKGGYI…LRNKFVEKVT (123 aa). In terms of domain architecture, Ras-GEF spans 1339 to 1564; the sequence is KSLEIAEQMT…WQISEKIKPR (226 aa).

As to expression, ubiquitous.

Functionally, guanine nucleotide-releasing protein that binds to SH3 domain of Crk. Transduces signals from Crk to activate RAS. Also involved in MAPK activation. This is Guanine nucleotide-releasing factor 2 (C3G) from Drosophila melanogaster (Fruit fly).